A 338-amino-acid chain; its full sequence is MREKLEALLADAVAELSQVSTEDGLQELRVKYLGKKGELTAVMKGLGALSPEERPVIGQVVNTVKGELEAKIESAGLKIREDIKAEKLRSERVDVTLPGRRRPIGTRHPITLVIEEITAIFAGLGFLVAEGPEIEHDFYNFEALNFPKDHPARDMQDTFFISDTVLLRTHTSPVQIRTMLKQAPPVRIIAPGTVYRCDSDATHSPMFHQIEGLMVDKGVTFGDLKGILTIFINQLFGQGTGVRLRPSFFPFTEPSAEVDIACVICKGKGCRVCKNTGWLEILGAGMVDPEVYRHVNYDSEIYSGFAFGMGIERIAMLKYGISDMRLLFENDLRFLKQF.

Glu-253 lines the Mg(2+) pocket.

This sequence belongs to the class-II aminoacyl-tRNA synthetase family. Phe-tRNA synthetase alpha subunit type 1 subfamily. In terms of assembly, tetramer of two alpha and two beta subunits. Mg(2+) serves as cofactor.

The protein resides in the cytoplasm. The enzyme catalyses tRNA(Phe) + L-phenylalanine + ATP = L-phenylalanyl-tRNA(Phe) + AMP + diphosphate + H(+). The polypeptide is Phenylalanine--tRNA ligase alpha subunit (Geotalea uraniireducens (strain Rf4) (Geobacter uraniireducens)).